The primary structure comprises 137 residues: Chaperone protein YscB (137 aa).

In terms of assembly, interacts with SycN to form a complex which specifically binds to YopN.

It is found in the cytoplasm. The protein localises to the cell inner membrane. In terms of biological role, functions as a specific chaperone for YopN. It could facilitate the secretion and the subsequent translocation of YopN. This chain is Chaperone protein YscB (yscB), found in Yersinia enterocolitica.